Here is a 150-residue protein sequence, read N- to C-terminus: MIGLIQRVREARVEVDGVVVGRTGRGLLALIGVQRDDDEPQARRLLERILGYRVFPDEAGRMNRSVRDIGGGLLLVPQFTLAADTRKGMRASFAPAASPERGEALFHRLLGLARESGVPVEAGRFAADMQVHLINDGPVTFWLEARPSAA.

Residues 137 to 138 carry the Gly-cisPro motif, important for rejection of L-amino acids motif; sequence GP.

It belongs to the DTD family. Homodimer.

Its subcellular location is the cytoplasm. The catalysed reaction is glycyl-tRNA(Ala) + H2O = tRNA(Ala) + glycine + H(+). The enzyme catalyses a D-aminoacyl-tRNA + H2O = a tRNA + a D-alpha-amino acid + H(+). In terms of biological role, an aminoacyl-tRNA editing enzyme that deacylates mischarged D-aminoacyl-tRNAs. Also deacylates mischarged glycyl-tRNA(Ala), protecting cells against glycine mischarging by AlaRS. Acts via tRNA-based rather than protein-based catalysis; rejects L-amino acids rather than detecting D-amino acids in the active site. By recycling D-aminoacyl-tRNA to D-amino acids and free tRNA molecules, this enzyme counteracts the toxicity associated with the formation of D-aminoacyl-tRNA entities in vivo and helps enforce protein L-homochirality. The polypeptide is D-aminoacyl-tRNA deacylase (Alkalilimnicola ehrlichii (strain ATCC BAA-1101 / DSM 17681 / MLHE-1)).